The sequence spans 847 residues: Alpha-glucuronidase A (847 aa).

The first 22 residues, 1 to 22, serve as a signal peptide directing secretion; it reads MRSFLLLTALLGVAAVAEDGLA. N-linked (GlcNAc...) asparagine glycosylation is found at N48, N78, N227, N315, N349, N457, N472, N534, N583, N689, N738, N739, and N769.

It belongs to the glycosyl hydrolase 67 family.

The protein resides in the secreted. The catalysed reaction is an alpha-D-glucuronoside + H2O = D-glucuronate + an alcohol. Functionally, alpha-glucuronidase involved in the hydrolysis of xylan, a major structural heterogeneous polysaccharide found in plant biomass representing the second most abundant polysaccharide in the biosphere, after cellulose. Releases 4-O-methylglucuronic acid from xylan. This is Alpha-glucuronidase A (aguA) from Emericella nidulans (strain FGSC A4 / ATCC 38163 / CBS 112.46 / NRRL 194 / M139) (Aspergillus nidulans).